The primary structure comprises 460 residues: Crocetin glucosyltransferase 2 (460 aa).

His-19 functions as the Proton acceptor in the catalytic mechanism. An anthocyanidin is bound at residue His-19. Residues Thr-133, Gln-333, His-348, Trp-351, Asn-352, Ser-353, Glu-356, Asp-372, and Gln-373 each contribute to the UDP-alpha-D-glucose site.

Belongs to the UDP-glycosyltransferase family. In terms of tissue distribution, mainly expressed in fully developed stigmas.

The catalysed reaction is crocetin + UDP-alpha-D-glucose = beta-D-glucosyl crocetin + UDP. The enzyme catalyses beta-D-glucosyl crocetin + UDP-alpha-D-glucose = bis(beta-D-glucosyl) crocetin + UDP. It catalyses the reaction beta-D-gentiobiosyl crocetin + UDP-alpha-D-glucose = beta-D-gentiobiosyl beta-D-glucosyl crocetin + UDP. Crocetin glucosyltransferase involved in the synthesis of crocin, one of the apocarotenoids responsible for the color and bitter taste of saffron. This Crocus sativus (Saffron) protein is Crocetin glucosyltransferase 2 (GLT2).